The primary structure comprises 296 residues: tRNA dimethylallyltransferase (296 aa).

An ATP-binding site is contributed by 2–9; it reads GPTASGKT. 4-9 is a substrate binding site; that stretch reads TASGKT. Interaction with substrate tRNA regions lie at residues 27-30, 151-155, and 232-237; these read DSAL, QRLSR, and RCVGYR.

This sequence belongs to the IPP transferase family. As to quaternary structure, monomer. Requires Mg(2+) as cofactor.

The catalysed reaction is adenosine(37) in tRNA + dimethylallyl diphosphate = N(6)-dimethylallyladenosine(37) in tRNA + diphosphate. Its function is as follows. Catalyzes the transfer of a dimethylallyl group onto the adenine at position 37 in tRNAs that read codons beginning with uridine, leading to the formation of N6-(dimethylallyl)adenosine (i(6)A). The protein is tRNA dimethylallyltransferase of Shewanella baltica (strain OS155 / ATCC BAA-1091).